The following is a 225-amino-acid chain: UPF0173 metal-dependent hydrolase PF1764 (225 aa).

Belongs to the UPF0173 family.

This Pyrococcus furiosus (strain ATCC 43587 / DSM 3638 / JCM 8422 / Vc1) protein is UPF0173 metal-dependent hydrolase PF1764.